We begin with the raw amino-acid sequence, 423 residues long: Histidine--tRNA ligase 2 (423 aa).

Belongs to the class-II aminoacyl-tRNA synthetase family. In terms of assembly, homodimer.

It localises to the cytoplasm. It carries out the reaction tRNA(His) + L-histidine + ATP = L-histidyl-tRNA(His) + AMP + diphosphate + H(+). This is Histidine--tRNA ligase 2 from Bacillus cereus (strain ATCC 14579 / DSM 31 / CCUG 7414 / JCM 2152 / NBRC 15305 / NCIMB 9373 / NCTC 2599 / NRRL B-3711).